A 111-amino-acid polypeptide reads, in one-letter code: MARGRGRHERRGEMPLPSEDEGTMLCIVQRVVGAGFLEVLCTDGEVYMARIPGKMRRRVWMREGDVVLFLPWGTADKKGEVVYRYLRDEVRKLIDMNLLPEELVEEVAGAE.

An S1-like domain is found at 12–86 (GEMPLPSEDE…KKGEVVYRYL (75 aa)).

This sequence belongs to the eIF-1A family.

Seems to be required for maximal rate of protein biosynthesis. Enhances ribosome dissociation into subunits and stabilizes the binding of the initiator Met-tRNA(I) to 40 S ribosomal subunits. This chain is Translation initiation factor 1A (eIF1A), found in Aeropyrum pernix (strain ATCC 700893 / DSM 11879 / JCM 9820 / NBRC 100138 / K1).